The sequence spans 432 residues: Luc7-like protein 3 (432 aa).

M1 is modified (N-acetylmethionine). 3 positions are modified to phosphoserine: S3, S110, and S115. Residues K124 to S181 are a coiled coil. K231 is subject to N6-acetyllysine. The segment covering L234–R287 has biased composition (basic and acidic residues). A disordered region spans residues L234–N432. Over residues E288–S301 the composition is skewed to basic residues. Residues R302–S311 show a composition bias toward basic and acidic residues. Positions R312–S367 are enriched in basic residues. Residues R368 to N414 show a composition bias toward basic and acidic residues. S420 bears the Phosphoserine mark. Over residues E421 to N432 the composition is skewed to basic and acidic residues. Residue K424 forms a Glycyl lysine isopeptide (Lys-Gly) (interchain with G-Cter in SUMO1); alternate linkage. Residue K424 forms a Glycyl lysine isopeptide (Lys-Gly) (interchain with G-Cter in SUMO2); alternate linkage. 2 positions are modified to phosphoserine: S425 and S431.

The protein belongs to the Luc7 family. May interact with SFRS1 and form homodimers. Interacts with JMJD6. Interacts with RBM25. Interacts with RSRC1 (via Arg/Ser-rich domain). Interacts with RRP1B.

It is found in the nucleus speckle. Functionally, binds cAMP regulatory element DNA sequence. May play a role in RNA splicing. The sequence is that of Luc7-like protein 3 (LUC7L3) from Bos taurus (Bovine).